We begin with the raw amino-acid sequence, 227 residues long: Uracil-DNA glycosylase (227 aa).

Catalysis depends on aspartate 68, which acts as the Proton acceptor.

Belongs to the uracil-DNA glycosylase (UDG) superfamily. UNG family.

The protein localises to the cytoplasm. The enzyme catalyses Hydrolyzes single-stranded DNA or mismatched double-stranded DNA and polynucleotides, releasing free uracil.. Functionally, excises uracil residues from the DNA which can arise as a result of misincorporation of dUMP residues by DNA polymerase or due to deamination of cytosine. The sequence is that of Uracil-DNA glycosylase from Mycolicibacterium paratuberculosis (strain ATCC BAA-968 / K-10) (Mycobacterium paratuberculosis).